The chain runs to 278 residues: Small ribosomal subunit protein uS3 (278 aa).

The region spanning 38 to 106 (IRKLLATGLE…QVQLNILEVK (69 aa)) is the KH type-2 domain. The interval 215–278 (AAAAPAGADR…AAGQPETTES (64 aa)) is disordered. Positions 238–278 (SGASGTTATSTDAGRAATEEAPATDAAATAPAAGQPETTES) are enriched in low complexity.

It belongs to the universal ribosomal protein uS3 family. In terms of assembly, part of the 30S ribosomal subunit. Forms a tight complex with proteins S10 and S14.

Binds the lower part of the 30S subunit head. Binds mRNA in the 70S ribosome, positioning it for translation. The polypeptide is Small ribosomal subunit protein uS3 (Mycolicibacterium gilvum (strain PYR-GCK) (Mycobacterium gilvum (strain PYR-GCK))).